A 631-amino-acid polypeptide reads, in one-letter code: ATP-dependent DNA helicase 2 subunit 1 (631 aa).

Residues 262 to 487 form the Ku domain; sequence FYLGPNLSMS…VEFFQKIIKK (226 aa). Positions 550 to 570 are disordered; that stretch reads AEPHKKRAAKSTTAGASGPKM.

This sequence belongs to the ku70 family. In terms of assembly, heterodimer of a 70 kDa and a 80 kDa subunit.

It is found in the nucleus. The protein localises to the chromosome. It catalyses the reaction ATP + H2O = ADP + phosphate + H(+). Functionally, single-stranded DNA-dependent ATP-dependent helicase. Involved in non-homologous end joining (NHEJ) DNA double strand break repair. Sequence-specific DNA-binding protein that has a high affinity for a 31 bp sequence in the Yp1 gene. Site-specific DNA binding to 31 bp P element inverted repeats. In Drosophila melanogaster (Fruit fly), this protein is ATP-dependent DNA helicase 2 subunit 1 (Irbp).